Here is a 362-residue protein sequence, read N- to C-terminus: Methylthioribose-1-phosphate isomerase (362 aa).

The active-site Proton donor is the Asp252.

This sequence belongs to the eIF-2B alpha/beta/delta subunits family. MtnA subfamily.

It localises to the cytoplasm. Its subcellular location is the nucleus. It carries out the reaction 5-(methylsulfanyl)-alpha-D-ribose 1-phosphate = 5-(methylsulfanyl)-D-ribulose 1-phosphate. The protein operates within amino-acid biosynthesis; L-methionine biosynthesis via salvage pathway; L-methionine from S-methyl-5-thio-alpha-D-ribose 1-phosphate: step 1/6. Functionally, catalyzes the interconversion of methylthioribose-1-phosphate (MTR-1-P) into methylthioribulose-1-phosphate (MTRu-1-P). This chain is Methylthioribose-1-phosphate isomerase, found in Drosophila mojavensis (Fruit fly).